Here is a 196-residue protein sequence, read N- to C-terminus: Alpha-crystallin A chain (196 aa).

N-acetylmethionine is present on M1. A required for complex formation with BFSP1 and BFSP2 region spans residues 1 to 63 (MDVTIQHPWF…RTVLDSGISE (63 aa)). Position 6 is a deamidated glutamine; partial (Q6). S45 carries the phosphoserine modification. A Deamidated glutamine; partial modification is found at Q50. One can recognise a sHSP domain in the interval 76–185 (HAGNPKNNPG…GHSERAIPVS (110 aa)). An N6-acetyllysine mark is found at K93 and K122. Residue H123 coordinates Zn(2+). N124 is subject to Deamidated asparagine; partial. Residues E125 and H130 each contribute to the Zn(2+) site. S145 carries the post-translational modification Phosphoserine. N146 is modified (deamidated asparagine; partial). The disordered stretch occupies residues 168 to 196 (KVQSGLDAGHSERAIPVSREEKPSSAPSS). A Deamidated glutamine; partial modification is found at Q170. Positions 176-190 (GHSERAIPVSREEKP) are enriched in basic and acidic residues. H177 contributes to the Zn(2+) binding site. O-linked (GlcNAc) serine glycosylation is present at S185.

Belongs to the small heat shock protein (HSP20) family. Heteropolymer composed of three CRYAA and one CRYAB subunits. Inter-subunit bridging via zinc ions enhances stability, which is crucial as there is no protein turn over in the lens. Can also form homodimers and homotetramers (dimers of dimers) which serve as the building blocks of homooligomers. Within homooligomers, the zinc-binding motif is created from residues of 3 different molecules. His-123 and Glu-125 from one molecule are ligands of the zinc ion, and His-130 and His-177 residues from additional molecules complete the site with tetrahedral coordination geometry. Part of a complex required for lens intermediate filament formation composed of BFSP1, BFSP2 and CRYAA. Acetylation at Lys-93 may increase chaperone activity. In terms of processing, undergoes age-dependent proteolytical cleavage at the C-terminus. Cleavage by m-calpain produces specifically alpha-crystallin A(1-162), cleavage by Capn3/Lp82 produces specifically alpha-crystallin A(1-168) which is the major truncated form during normal maturation and induced cataract formation. Highly expressed in eye lens. Also expressed in non-lenticular tissues such as brain, spleen, liver, lung, skin, small intestine and a several epithelial and fibroblast cell lines with highest levels in spleen.

It localises to the cytoplasm. The protein resides in the nucleus. Functionally, contributes to the transparency and refractive index of the lens. Acts as a chaperone, preventing aggregation of various proteins under a wide range of stress conditions. Required for the correct formation of lens intermediate filaments as part of a complex composed of BFSP1, BFSP2 and CRYAA. In terms of biological role, inhibits bacterial growth in the lens. In Rattus norvegicus (Rat), this protein is Alpha-crystallin A chain (Cryaa).